We begin with the raw amino-acid sequence, 439 residues long: Hydroxyornithine transacylase SID3 (439 aa).

The short motif at 437 to 439 (SKL) is the PTS1-type peroxisomal targeting signal element.

The protein belongs to the lysine N-acyltransferase mbtK family.

Its subcellular location is the peroxisome. The protein operates within siderophore biosynthesis. Its function is as follows. Hydroxyornithine transacylase; part of the gene cluster that mediates the biosynthesis of hydroxamate-containing siderophores that play a critical role in virulence via intracellular iron acquisition during macrophage infection. The chain is Hydroxyornithine transacylase SID3 from Ajellomyces capsulatus (Darling's disease fungus).